Consider the following 231-residue polypeptide: Glutathione-S-transferase (231 aa).

Residues 15–98 form the GST N-terminal domain; sequence LFAVKGTATS…YIADAYDKDG (84 aa).

The protein belongs to the GST superfamily.

It catalyses the reaction RX + glutathione = an S-substituted glutathione + a halide anion + H(+). Functionally, conjugation of reduced glutathione to a wide number of exogenous and endogenous hydrophobic electrophiles. This chain is Glutathione-S-transferase, found in Alternaria alternata (Alternaria rot fungus).